Consider the following 602-residue polypeptide: Ligand-dependent nuclear receptor corepressor-like protein (602 aa).

Residues 104–124 form a disordered region; sequence PSLDSSQSTPTEELSSQGQSN. Polar residues predominate over residues 106–124; sequence LDSSQSTPTEELSSQGQSN. Glycyl lysine isopeptide (Lys-Gly) (interchain with G-Cter in SUMO2) cross-links involve residues K242, K319, K340, and K397. Disordered regions lie at residues 495 to 521 and 564 to 602; these read TVDGTSENTEDGLDRKDSKQPRKKRGR and ERSGTLKTPPKKKLRLPDTGLYNMTDSGTGSCKNSSKPV. The 53-residue stretch at 516–568 folds into the HTH psq-type domain; it reads RKKRGRYRQYDHEIMEEAIAMVMSGKMSVSKAQGIYGVPHSTLEYKVKERSGT. Positions 544–564 form a DNA-binding region, H-T-H motif; that stretch reads VSKAQGIYGVPHSTLEYKVKE. Polar residues predominate over residues 585–602; that stretch reads YNMTDSGTGSCKNSSKPV.

Its subcellular location is the nucleus. Functionally, may act as transcription activator that binds DNA elements with the sequence 5'-CCCTATCGATCGATCTCTACCT-3'. May play a role in spermatogenesis. The polypeptide is Ligand-dependent nuclear receptor corepressor-like protein (LCORL) (Homo sapiens (Human)).